Here is a 53-residue protein sequence, read N- to C-terminus: Light-harvesting protein B-800/820 alpha chain (53 aa).

The Cytoplasmic portion of the chain corresponds to 1 to 14 (MNQGKIWTVVNPAV). Residues 15 to 35 (GLPLLLGSVAITALLVHLAVL) traverse the membrane as a helical segment. An a bacteriochlorophyll-binding site is contributed by His31. Topologically, residues 36 to 53 (THTTWFPAFTQGGLKKAA) are periplasmic.

The protein belongs to the antenna complex alpha subunit family. The core complex is formed by different alpha and beta chains, binding bacteriochlorophyll molecules, and arranged most probably in tetrameric structures disposed around the reaction center. The non-pigmented gamma chains may constitute additional components.

The protein resides in the cell inner membrane. Functionally, antenna complexes are light-harvesting systems, which transfer the excitation energy to the reaction centers. This Rhodoblastus acidophilus (Rhodopseudomonas acidophila) protein is Light-harvesting protein B-800/820 alpha chain.